Consider the following 675-residue polypeptide: Protein kintoun (675 aa).

4 disordered regions span residues 98 to 131 (ASKK…KQGA), 265 to 293 (AGEG…TAPP), 310 to 340 (EGGA…AVAK), and 509 to 659 (EAAH…AAPT). Positions 102–113 (QQQEQEKQEKEQ) are enriched in basic and acidic residues. The span at 279–293 (VPGVPDLPGAKTAPP) shows a compositional bias: low complexity. Positions 529-543 (AAAASSGAAPAPAAA) are enriched in low complexity. The span at 544-553 (SEEEEEEDKE) shows a compositional bias: acidic residues. Low complexity predominate over residues 564–577 (DPAAAAAAAGASSG). Basic and acidic residues predominate over residues 579-596 (ELTENERKWRELHARQQQ). Composition is skewed to low complexity over residues 604 to 617 (AAEA…AAAE) and 628 to 659 (VAQG…AAPT).

It belongs to the PIH1 family. Kintoun subfamily.

The protein localises to the cytoplasm. In terms of biological role, required for cytoplasmic pre-assembly of axonemal dyneins, thereby playing a central role in motility in cilia and flagella. Involved in pre-assembly of dynein arm complexes in the cytoplasm before intraflagellar transport loads them for the ciliary compartment. The protein is Protein kintoun (pf13) of Chlamydomonas reinhardtii (Chlamydomonas smithii).